Consider the following 237-residue polypeptide: MSNPIYKRILLKLSGEALQGDEGFGIDPSILDRMALEIKELIEMGVEVGVVLGGGNLFRGAKLAKAGMNRVVGDHMGMLATVMNGLAMRDALHRADVNAKLMSAFQLNGICDTYNWSEAIKMLREKRVVIFSAGTGSPFFTTDSAACLRGIEIEADIVLKATKVDGVYDKDPAKFADAKLYNQLTYAEVIEQELQVMDLAAFTLARDHGMPIRVFNMVKPGALKQVITGTAEGTIIS.

Position 12 to 15 (12 to 15) interacts with ATP; that stretch reads KLSG. The involved in allosteric activation by GTP stretch occupies residues 20-25; it reads GDEGFG. G54 lines the UMP pocket. Residues G55 and R59 each contribute to the ATP site. UMP is bound by residues D74 and 135–142; that span reads TGSPFFTT. ATP contacts are provided by T162, Y168, and D171.

Belongs to the UMP kinase family. In terms of assembly, homohexamer.

The protein localises to the cytoplasm. It catalyses the reaction UMP + ATP = UDP + ADP. The protein operates within pyrimidine metabolism; CTP biosynthesis via de novo pathway; UDP from UMP (UMPK route): step 1/1. With respect to regulation, allosterically activated by GTP. Inhibited by UTP. Functionally, catalyzes the reversible phosphorylation of UMP to UDP. This Actinobacillus pleuropneumoniae serotype 5b (strain L20) protein is Uridylate kinase.